Consider the following 130-residue polypeptide: Small ribosomal subunit protein uS8 (130 aa).

Belongs to the universal ribosomal protein uS8 family. In terms of assembly, part of the 30S ribosomal subunit. Contacts proteins S5 and S12.

In terms of biological role, one of the primary rRNA binding proteins, it binds directly to 16S rRNA central domain where it helps coordinate assembly of the platform of the 30S subunit. This is Small ribosomal subunit protein uS8 from Cellvibrio japonicus (strain Ueda107) (Pseudomonas fluorescens subsp. cellulosa).